We begin with the raw amino-acid sequence, 208 residues long: Uracil phosphoribosyltransferase (208 aa).

Residues R78, R103, and 130 to 138 (DPMLATGGS) contribute to the 5-phospho-alpha-D-ribose 1-diphosphate site. Residues I193 and 198 to 200 (GDA) each bind uracil. D199 is a 5-phospho-alpha-D-ribose 1-diphosphate binding site.

It belongs to the UPRTase family. It depends on Mg(2+) as a cofactor.

The enzyme catalyses UMP + diphosphate = 5-phospho-alpha-D-ribose 1-diphosphate + uracil. Its pathway is pyrimidine metabolism; UMP biosynthesis via salvage pathway; UMP from uracil: step 1/1. Its activity is regulated as follows. Allosterically activated by GTP. Its function is as follows. Catalyzes the conversion of uracil and 5-phospho-alpha-D-ribose 1-diphosphate (PRPP) to UMP and diphosphate. This chain is Uracil phosphoribosyltransferase, found in Shewanella baltica (strain OS223).